We begin with the raw amino-acid sequence, 1064 residues long: Importin-13 homolog A (1064 aa).

The Importin N-terminal domain maps to 40-109; the sequence is ALPQIQQWLI…LDNLLLFLKT (70 aa). Disordered regions lie at residues 695–722 and 839–860; these read TTQQ…NNNN and NNKK…NENN. Low complexity predominate over residues 700–722; it reads NNNNNNNNNNNNNNNNNNNNNNN.

Belongs to the importin beta family. As to quaternary structure, forms a complex with an importin alpha subunit.

The protein resides in the cytoplasm. The protein localises to the nucleus envelope. Functionally, required for nuclear protein import and mediates docking of import substrate to distinct nucleoporins. The protein is Importin-13 homolog A (ipo13A) of Dictyostelium discoideum (Social amoeba).